The primary structure comprises 540 residues: Zinc transporter ZIP5 (540 aa).

The first 20 residues, 1–20 (MMGSPVSHLLAGFCVWVVLG), serve as a signal peptide directing secretion. Residues 21–212 (WVGGSVPNLG…PAPPGDLLSA (192 aa)) lie on the Extracellular side of the membrane. Asparagine 50 is a glycosylation site (N-linked (GlcNAc...) asparagine). The interval 78-101 (HGPLTGRAASPAADNSTHRPQNPE) is disordered. The segment covering 90–101 (ADNSTHRPQNPE) has biased composition (polar residues). A glycan (N-linked (GlcNAc...) asparagine) is linked at asparagine 160. A helical membrane pass occupies residues 213–233 (LLQSALAVLLLSLPSPLSLLL). The Cytoplasmic segment spans residues 234–244 (LRLLGPRLLRP). The chain crosses the membrane as a helical span at residues 245–265 (LLGFLGALAVGTLCGDALLHL). Topologically, residues 266-287 (LPHAQEGRHAGPGGLPEKDLGP) are extracellular. Residues 288–308 (GLSVLGGLFLLFVLENMLGLL) traverse the membrane as a helical segment. The Cytoplasmic portion of the chain corresponds to 309 to 444 (RHRGLRPRCC…LLQSGLSFRR (136 aa)). Positions 324-377 (NLETRNLDPENGSGMALQPLQAAPEPGAQGQREKNSQHPPALAPPGHQGHSHGH) are disordered. Serine 336 carries the phosphoserine modification. Histidine 375 bears the Pros-methylhistidine mark. Residues 445 to 465 (LLLLSLVSGALGLGGAVLGVG) traverse the membrane as a helical segment. The Extracellular portion of the chain corresponds to 466-470 (LSLGP). The chain crosses the membrane as a helical span at residues 471–491 (VPLTPWVFGVTAGVFLYVALV). Residues 492–508 (DMLPALLRPPEPLPTPH) are Cytoplasmic-facing. A helical transmembrane segment spans residues 509–529 (VLLQGLGLLLGGGLMLAITLL). Residues 530–540 (EERLLPVTTEG) lie on the Extracellular side of the membrane.

This sequence belongs to the ZIP transporter (TC 2.A.5) family. As to quaternary structure, homodimer. Post-translationally, methylated at His-375 by METTL9. In terms of processing, N-Glycosylated. As to expression, expressed in liver, kidney, pancreas, small intestine, colon, spleen, fetal liver and fetal kidney.

It is found in the basolateral cell membrane. It catalyses the reaction Zn(2+)(in) = Zn(2+)(out). Its function is as follows. Uniporter that transports zinc(2+) into polarized cells of enterocytes, pancreatic acinar and endoderm cells across the basolateral membrane and participates, notably, in zinc excretion from the intestine by the uptake of zinc from the blood into the intestine. The transport mechanism is temperature- and concentration-dependent and saturable. In addition, is also a high affinity copper transporter in vitro. Also may regulate glucose-stimulated insulin secretion (GSIS) in islets primarily through the zinc-activated SIRT1-PPARGC1A axis. Could regulate the BMP/TGF-beta (bone morphogenetic protein/transforming growth factor-beta) signaling pathway and modulates extracellular matrix (ECM) proteins of the sclera. Plays a role in eye development. In Homo sapiens (Human), this protein is Zinc transporter ZIP5.